Consider the following 113-residue polypeptide: Nucleoid-associated protein SYNW0027 (113 aa).

Belongs to the YbaB/EbfC family. As to quaternary structure, homodimer.

Its subcellular location is the cytoplasm. It is found in the nucleoid. Its function is as follows. Binds to DNA and alters its conformation. May be involved in regulation of gene expression, nucleoid organization and DNA protection. This is Nucleoid-associated protein SYNW0027 from Parasynechococcus marenigrum (strain WH8102).